The following is a 282-amino-acid chain: Glutamyl endopeptidase (282 aa).

Positions 1 to 27 (MKKRFLSICTMTIAALATTTMVNTSYA) are cleaved as a signal peptide. A propeptide spanning residues 28 to 66 (KTDTESHNHSSLGTENKNVLDINSSSHNIKPSQNKSYPS) is cleaved from the precursor. Active-site charge relay system residues include His-117, Asp-159, and Ser-235.

This sequence belongs to the peptidase S1B family.

The protein localises to the secreted. The enzyme catalyses Preferential cleavage: Glu-|-Xaa, Asp-|-Xaa.. Functionally, exhibits a significant hydrolytic activity for the carbonyl side of glutamic acid. Shows activity toward human fibronectin and type 1 collagen. The sequence is that of Glutamyl endopeptidase (gseA) from Staphylococcus epidermidis (strain ATCC 35984 / DSM 28319 / BCRC 17069 / CCUG 31568 / BM 3577 / RP62A).